Consider the following 326-residue polypeptide: Zinc finger protein 830 (326 aa).

Positions 1-11 (MAASRKGKAVK) are enriched in basic residues. A disordered region spans residues 1-37 (MAASRKGKAVKAVKQEDLRRLMQETRRDSGRQKRVES). Over residues 13–36 (VKQEDLRRLMQETRRDSGRQKRVE) the composition is skewed to basic and acidic residues. The segment at 50-72 (CALCDAPVKNALLWQTHVLGKQH) adopts a C2H2-type zinc-finger fold. Residues 83-108 (TAPAHTPAPAHTPAHTPAAASSSSST) are compositionally biased toward low complexity. 3 disordered regions span residues 83–214 (TAPA…PVRD), 237–257 (EMRQ…EEGR), and 276–309 (EELR…EEEE). The span at 180–195 (HSGSVSKAEQQESQEP) shows a compositional bias: polar residues. Residues 224 to 295 (KDQLEREWEE…RSRRRSQRRE (72 aa)) are a coiled coil. Residues 276-286 (EELRAKQETAR) show a composition bias toward basic and acidic residues. Residues 298 to 309 (PMQEEEPLEEEE) are compositionally biased toward acidic residues.

Its subcellular location is the nucleus. The protein resides in the chromosome. It localises to the nucleus speckle. May act as an important regulator of the cell cycle that participates in the maintenance of genome integrity. This Danio rerio (Zebrafish) protein is Zinc finger protein 830.